A 207-amino-acid chain; its full sequence is Flavin-dependent thymidylate synthase (207 aa).

A ThyX domain is found at 1 to 204 (MQITLLFHTP…KFIFEHCLHK (204 aa)). FAD-binding positions include S50 and 74-76 (RHR). Residues 71–74 (EVAR), 84–86 (STR), and K143 contribute to the dUMP site. A ThyX motif motif is present at residues 74-84 (RHRHTSPSVKS). Residues 159 to 161 (NAR) and N165 each bind FAD. R170 contacts dUMP. R170 acts as the Involved in ionization of N3 of dUMP, leading to its activation in catalysis.

This sequence belongs to the thymidylate synthase ThyX family. In terms of assembly, homotetramer. FAD is required as a cofactor.

It catalyses the reaction dUMP + (6R)-5,10-methylene-5,6,7,8-tetrahydrofolate + NADPH + H(+) = dTMP + (6S)-5,6,7,8-tetrahydrofolate + NADP(+). It functions in the pathway pyrimidine metabolism; dTTP biosynthesis. Catalyzes the reductive methylation of 2'-deoxyuridine-5'-monophosphate (dUMP) to 2'-deoxythymidine-5'-monophosphate (dTMP) while utilizing 5,10-methylenetetrahydrofolate (mTHF) as the methyl donor, and NADPH and FADH(2) as the reductant. The protein is Flavin-dependent thymidylate synthase of Campylobacter jejuni subsp. jejuni serotype O:2 (strain ATCC 700819 / NCTC 11168).